The primary structure comprises 205 residues: Isochorismatase domain-containing protein 2 (205 aa).

The protein belongs to the isochorismatase family.

This is Isochorismatase domain-containing protein 2 (isoc2) from Xenopus laevis (African clawed frog).